The following is a 540-amino-acid chain: T-complex protein 1 subunit delta (540 aa).

Positions 1 to 12 are enriched in low complexity; the sequence is MPPAVPAAAATA. The tract at residues 1 to 32 is disordered; sequence MPPAVPAAAATARQSASGRERNFKDKDKPESV. Over residues 18–31 the composition is skewed to basic and acidic residues; it reads GRERNFKDKDKPES.

Belongs to the TCP-1 chaperonin family. Heterooligomeric complex of about 850 to 900 kDa that forms two stacked rings, 12 to 16 nm in diameter.

Its subcellular location is the cytoplasm. In terms of biological role, molecular chaperone; assists the folding of proteins upon ATP hydrolysis. Known to play a role, in vitro, in the folding of actin and tubulin. The sequence is that of T-complex protein 1 subunit delta (cct-4) from Caenorhabditis elegans.